A 627-amino-acid chain; its full sequence is tRNA uridine 5-carboxymethylaminomethyl modification enzyme MnmG (627 aa).

FAD is bound by residues Gly-13–Gly-18, Val-125, and Ser-180. Position 274-288 (Gly-274–Phe-288) interacts with NAD(+). Gln-371 serves as a coordination point for FAD.

Belongs to the MnmG family. Homodimer. Heterotetramer of two MnmE and two MnmG subunits. FAD is required as a cofactor.

It localises to the cytoplasm. NAD-binding protein involved in the addition of a carboxymethylaminomethyl (cmnm) group at the wobble position (U34) of certain tRNAs, forming tRNA-cmnm(5)s(2)U34. The sequence is that of tRNA uridine 5-carboxymethylaminomethyl modification enzyme MnmG from Francisella tularensis subsp. novicida (strain U112).